A 701-amino-acid polypeptide reads, in one-letter code: Meprin A subunit beta (701 aa).

The first 22 residues, 1–22 (MDLWNLSWFLFLDALLVISGLA), serve as a signal peptide directing secretion. The propeptide occupies 23 to 61 (TPENFDVDGGMDQDIFDINEGLGLDLFEGDIRLDRAQIR). The Extracellular portion of the chain corresponds to 23 to 652 (TPENFDVDGG…CEKRGSTRDT (630 aa)). Residues 62–256 (NSIIGEKYRW…LKLNQLYNCS (195 aa)) enclose the Peptidase M12A domain. 3 disulfide bridges follow: Cys-103–Cys-255, Cys-124–Cys-144, and Cys-265–Cys-427. Position 152 (His-152) interacts with Zn(2+). The active site involves Glu-153. His-156 and His-162 together coordinate Zn(2+). N-linked (GlcNAc...) asparagine glycosylation is found at Asn-218, Asn-254, Asn-370, Asn-421, Asn-436, Asn-445, Asn-547, and Asn-592. One can recognise an MAM domain in the interval 260–429 (SFMDSCSFEL…INLSETRCPH (170 aa)). An MATH domain is found at 430–585 (HIWHIRNFTQ…GDDVYILLTV (156 aa)). Residue Ser-593 is glycosylated (O-linked (GalNAc...) serine). O-linked (GalNAc...) threonine glycans are attached at residues Thr-594 and Thr-599. The tract at residues 595 to 607 (QIQLTPAPSVQDL) is required for proteolytic processing. O-linked (GalNAc...) serine glycosylation occurs at Ser-603. Residues 604 to 644 (VQDLCSKTTCKNDGVCTVRDGKAECRCQSGEDWWYMGERCE) enclose the EGF-like domain. Cystine bridges form between Cys-608–Cys-619, Cys-613–Cys-628, and Cys-630–Cys-643. The chain crosses the membrane as a helical span at residues 653 to 673 (IVIAVSSTVAVFALMLIITLV). Topologically, residues 674–701 (SVYCTRKKYRERMSSNRPNLTPQNQHAF) are cytoplasmic. Phosphothreonine is present on Thr-694.

As to quaternary structure, homotetramer consisting of disulfide-linked beta subunits, or heterotetramer of two alpha and two beta subunits formed by non-covalent association of two disulfide-linked heterodimers. Interacts with MBL2 through its carbohydrate moiety. This interaction may inhibit its catalytic activity. Interacts with TSPAN8. Zn(2+) is required as a cofactor. Phosphorylated by PKC at multiple sites of its cytoplasmic part. Phosphorylation dcreases activity at the cell surface, leading to diminished substrate cleavage. Post-translationally, N-glycosylated; contains high mannose and/or complex biantennary structures. In terms of processing, O-glycosylation protect the C-terminal region from proteolytic cleavage and diminish secretion, this seems to be specific to human. Proteolytically activated by trypsin in the intestinal lumen and kallikrein-related peptidases in other tissues. The major site of expression is the brush border membrane of small intestinal and kidney epithelial cells.

It localises to the cell membrane. It is found in the secreted. It catalyses the reaction Hydrolysis of proteins, including azocasein, and peptides. Hydrolysis of 5-His-|-Leu-6, 6-Leu-|-Cys-7, 14-Ala-|-Leu-15 and 19-Cys-|-Gly-20 bonds in insulin B chain.. Its activity is regulated as follows. Strongly inhibited by fetuin-A/AHSG. Functionally, membrane metallopeptidase that sheds many membrane-bound proteins. Exhibits a strong preference for acidic amino acids at the P1' position. Known substrates include: FGF19, VGFA, IL1B, IL18, procollagen I and III, E-cadherin, KLK7, gastrin, ADAM10, tenascin-C. The presence of several pro-inflammatory cytokine among substrates implicate MEP1B in inflammation. It is also involved in tissue remodeling due to its capability to degrade extracellular matrix components. Also cleaves the amyloid precursor protein/APP, thereby releasing neurotoxic amyloid beta peptides. The protein is Meprin A subunit beta (MEP1B) of Homo sapiens (Human).